We begin with the raw amino-acid sequence, 887 residues long: Alanine--tRNA ligase (887 aa).

Positions 575, 579, 677, and 681 each coordinate Zn(2+).

This sequence belongs to the class-II aminoacyl-tRNA synthetase family. Zn(2+) serves as cofactor.

The protein resides in the cytoplasm. The catalysed reaction is tRNA(Ala) + L-alanine + ATP = L-alanyl-tRNA(Ala) + AMP + diphosphate. Its function is as follows. Catalyzes the attachment of alanine to tRNA(Ala) in a two-step reaction: alanine is first activated by ATP to form Ala-AMP and then transferred to the acceptor end of tRNA(Ala). Also edits incorrectly charged Ser-tRNA(Ala) and Gly-tRNA(Ala) via its editing domain. This chain is Alanine--tRNA ligase, found in Geobacillus kaustophilus (strain HTA426).